Consider the following 91-residue polypeptide: Small ribosomal subunit protein bS16 (91 aa).

Belongs to the bacterial ribosomal protein bS16 family.

This chain is Small ribosomal subunit protein bS16, found in Ligilactobacillus salivarius (strain UCC118) (Lactobacillus salivarius).